Reading from the N-terminus, the 610-residue chain is UvrABC system protein C (610 aa).

A GIY-YIG domain is found at 16-94; the sequence is SQPGVYRMYD…IKLYQPRYNV (79 aa). The region spanning 204 to 239 is the UVR domain; it reads QQVLHQLIERMENASKALNFEEAARIRDQIQAVRRV.

The protein belongs to the UvrC family. As to quaternary structure, interacts with UvrB in an incision complex.

Its subcellular location is the cytoplasm. Functionally, the UvrABC repair system catalyzes the recognition and processing of DNA lesions. UvrC both incises the 5' and 3' sides of the lesion. The N-terminal half is responsible for the 3' incision and the C-terminal half is responsible for the 5' incision. This chain is UvrABC system protein C, found in Serratia proteamaculans (strain 568).